The following is a 150-amino-acid chain: Large ribosomal subunit protein bL9 (150 aa).

This sequence belongs to the bacterial ribosomal protein bL9 family.

Its function is as follows. Binds to the 23S rRNA. In Vibrio campbellii (strain ATCC BAA-1116), this protein is Large ribosomal subunit protein bL9.